The following is a 159-amino-acid chain: Putative UPF0479 protein YDR545C-A (159 aa).

A run of 2 helical transmembrane segments spans residues 38–58 and 135–155; these read IVFCLPFFPALFLVPVQKVLQ and VPMIWLDVFQVFFVFLVISQH.

The protein belongs to the UPF0479 family.

The protein resides in the membrane. The chain is Putative UPF0479 protein YDR545C-A from Saccharomyces cerevisiae (strain ATCC 204508 / S288c) (Baker's yeast).